The primary structure comprises 156 residues: NADH-ubiquinone oxidoreductase chain 6 (156 aa).

5 consecutive transmembrane segments (helical) span residues 1–21 (MILT…YLAS), 24–44 (IVLG…FASF), 49–69 (FAFL…AYFL), 77–97 (ISNF…SALT), and 121–141 (STAP…VIVV).

Belongs to the complex I subunit 6 family.

The protein resides in the mitochondrion membrane. The enzyme catalyses a ubiquinone + NADH + 5 H(+)(in) = a ubiquinol + NAD(+) + 4 H(+)(out). Core subunit of the mitochondrial membrane respiratory chain NADH dehydrogenase (Complex I) that is believed to belong to the minimal assembly required for catalysis. Complex I functions in the transfer of electrons from NADH to the respiratory chain. The immediate electron acceptor for the enzyme is believed to be ubiquinone. The protein is NADH-ubiquinone oxidoreductase chain 6 (ND6) of Lumbricus terrestris (Common earthworm).